Consider the following 162-residue polypeptide: NADH-quinone oxidoreductase subunit I (162 aa).

4Fe-4S ferredoxin-type domains lie at 54–83 (RRYE…IESE) and 93–122 (TRYD…ETQI). Positions 63, 66, 69, 73, 102, 105, 108, and 112 each coordinate [4Fe-4S] cluster.

Belongs to the complex I 23 kDa subunit family. NDH-1 is composed of 14 different subunits. Subunits NuoA, H, J, K, L, M, N constitute the membrane sector of the complex. It depends on [4Fe-4S] cluster as a cofactor.

The protein resides in the cell inner membrane. The catalysed reaction is a quinone + NADH + 5 H(+)(in) = a quinol + NAD(+) + 4 H(+)(out). In terms of biological role, NDH-1 shuttles electrons from NADH, via FMN and iron-sulfur (Fe-S) centers, to quinones in the respiratory chain. The immediate electron acceptor for the enzyme in this species is believed to be ubiquinone. Couples the redox reaction to proton translocation (for every two electrons transferred, four hydrogen ions are translocated across the cytoplasmic membrane), and thus conserves the redox energy in a proton gradient. This chain is NADH-quinone oxidoreductase subunit I, found in Burkholderia pseudomallei (strain 668).